The chain runs to 118 residues: Small ribosomal subunit protein uS13 (118 aa).

The disordered stretch occupies residues 96-118 (PLRGQRTRTNARTRKGPRKAIKK).

The protein belongs to the universal ribosomal protein uS13 family. In terms of assembly, part of the 30S ribosomal subunit. Forms a loose heterodimer with protein S19. Forms two bridges to the 50S subunit in the 70S ribosome.

Located at the top of the head of the 30S subunit, it contacts several helices of the 16S rRNA. In the 70S ribosome it contacts the 23S rRNA (bridge B1a) and protein L5 of the 50S subunit (bridge B1b), connecting the 2 subunits; these bridges are implicated in subunit movement. Contacts the tRNAs in the A and P-sites. This Stenotrophomonas maltophilia (strain K279a) protein is Small ribosomal subunit protein uS13.